The chain runs to 84 residues: Sulfur carrier protein TusA (84 aa).

Cys-19 serves as the catalytic Cysteine persulfide intermediate.

The protein belongs to the sulfur carrier protein TusA family. Interacts with IscS.

It localises to the cytoplasm. The protein operates within tRNA modification. In terms of biological role, sulfur carrier protein involved in sulfur trafficking in the cell. Part of a sulfur-relay system required for 2-thiolation during synthesis of 2-thiouridine of the modified wobble base 5-methylaminomethyl-2-thiouridine (mnm(5)s(2)U) in tRNA. Interacts with IscS and stimulates its cysteine desulfurase activity. Accepts an activated sulfur from IscS, which is then transferred to TusD, and thus determines the direction of sulfur flow from IscS to 2-thiouridine formation. Also appears to be involved in sulfur transfer for the biosynthesis of molybdopterin. The sequence is that of Sulfur carrier protein TusA from Yersinia enterocolitica serotype O:8 / biotype 1B (strain NCTC 13174 / 8081).